The chain runs to 337 residues: Fructose-1,6-bisphosphatase class 1 (337 aa).

4 residues coordinate Mg(2+): Glu-90, Asp-112, Leu-114, and Asp-115. Residues 115-118 (DGSS), Asn-211, and Lys-277 contribute to the substrate site. Glu-283 contacts Mg(2+).

Belongs to the FBPase class 1 family. In terms of assembly, homotetramer. Mg(2+) serves as cofactor.

It localises to the cytoplasm. It catalyses the reaction beta-D-fructose 1,6-bisphosphate + H2O = beta-D-fructose 6-phosphate + phosphate. It functions in the pathway carbohydrate biosynthesis; gluconeogenesis. This is Fructose-1,6-bisphosphatase class 1 from Azotobacter vinelandii (strain DJ / ATCC BAA-1303).